The primary structure comprises 299 residues: Bifunctional protein FolD 2 (299 aa).

It belongs to the tetrahydrofolate dehydrogenase/cyclohydrolase family. As to quaternary structure, homodimer.

The catalysed reaction is (6R)-5,10-methylene-5,6,7,8-tetrahydrofolate + NADP(+) = (6R)-5,10-methenyltetrahydrofolate + NADPH. The enzyme catalyses (6R)-5,10-methenyltetrahydrofolate + H2O = (6R)-10-formyltetrahydrofolate + H(+). The protein operates within one-carbon metabolism; tetrahydrofolate interconversion. Functionally, catalyzes the oxidation of 5,10-methylenetetrahydrofolate to 5,10-methenyltetrahydrofolate and then the hydrolysis of 5,10-methenyltetrahydrofolate to 10-formyltetrahydrofolate. This chain is Bifunctional protein FolD 2 (FOLD2), found in Arabidopsis thaliana (Mouse-ear cress).